Reading from the N-terminus, the 243-residue chain is UPF0758 protein PCC7424_2073 (243 aa).

In terms of domain architecture, MPN spans 112 to 235; that stretch reads VEINDPVSAV…HQSLRTVTDL (124 aa). Zn(2+) contacts are provided by H184, H186, and D197. Positions 184-197 match the JAMM motif motif; it reads HNHPSGNVAPSQED.

It belongs to the UPF0758 family.

The sequence is that of UPF0758 protein PCC7424_2073 from Gloeothece citriformis (strain PCC 7424) (Cyanothece sp. (strain PCC 7424)).